We begin with the raw amino-acid sequence, 348 residues long: Photosystem II protein D1 (348 aa).

3 helical membrane-spanning segments follow: residues 33-50 (YIGWFGILMFPLLVLATV), 122-137 (HFILGAGAYMGREWEF), and 146-160 (WIFVAFSAPLVAASA). Residue histidine 122 coordinates chlorophyll a. Position 130 (tyrosine 130) interacts with pheophytin a. The [CaMn4O5] cluster site is built by aspartate 174 and glutamate 193. The chain crosses the membrane as a helical span at residues 201-222 (FHILGVAAVFGGSLFSAMHGSL). Residue histidine 202 participates in chlorophyll a binding. Residues histidine 219 and 268-269 (SF) each bind a quinone. Histidine 219 provides a ligand contact to Fe cation. Histidine 276 lines the Fe cation pocket. The helical transmembrane segment at 278 to 292 (FLAAWPVIGIWFTAL) threads the bilayer. 4 residues coordinate [CaMn4O5] cluster: histidine 336, glutamate 337, aspartate 346, and alanine 348.

This sequence belongs to the reaction center PufL/M/PsbA/D family. As to quaternary structure, PSII is composed of 1 copy each of membrane proteins PsbA, PsbB, PsbC, PsbD, PsbE, PsbF, PsbH, PsbI, PsbJ, PsbK, PsbL, PsbM, PsbT, PsbX, PsbY, PsbZ, Psb30/Ycf12, at least 3 peripheral proteins of the oxygen-evolving complex and a large number of cofactors. It forms dimeric complexes. The D1/D2 heterodimer binds P680, chlorophylls that are the primary electron donor of PSII, and subsequent electron acceptors. It shares a non-heme iron and each subunit binds pheophytin, quinone, additional chlorophylls, carotenoids and lipids. D1 provides most of the ligands for the Mn4-Ca-O5 cluster of the oxygen-evolving complex (OEC). There is also a Cl(-1) ion associated with D1 and D2, which is required for oxygen evolution. The PSII complex binds additional chlorophylls, carotenoids and specific lipids. is required as a cofactor. In terms of processing, tyr-165 forms a radical intermediate that is referred to as redox-active TyrZ, YZ or Y-Z.

Its subcellular location is the plastid. It localises to the chloroplast thylakoid membrane. The enzyme catalyses 2 a plastoquinone + 4 hnu + 2 H2O = 2 a plastoquinol + O2. Photosystem II (PSII) is a light-driven water:plastoquinone oxidoreductase that uses light energy to abstract electrons from H(2)O, generating O(2) and a proton gradient subsequently used for ATP formation. It consists of a core antenna complex that captures photons, and an electron transfer chain that converts photonic excitation into a charge separation. The D1/D2 (PsbA/PsbD) reaction center heterodimer binds P680, the primary electron donor of PSII as well as several subsequent electron acceptors. This is Photosystem II protein D1 from Heterocapsa pygmaea (Dinoflagellate).